We begin with the raw amino-acid sequence, 141 residues long: Endoribonuclease YbeY (141 aa).

Zn(2+)-binding residues include His-107, His-111, and His-117.

The protein belongs to the endoribonuclease YbeY family. It depends on Zn(2+) as a cofactor.

It is found in the cytoplasm. Functionally, single strand-specific metallo-endoribonuclease involved in late-stage 70S ribosome quality control and in maturation of the 3' terminus of the 16S rRNA. This Leptospira interrogans serogroup Icterohaemorrhagiae serovar Lai (strain 56601) protein is Endoribonuclease YbeY.